The primary structure comprises 109 residues: Large ribosomal subunit protein P1C (109 aa).

The span at 68–83 shows a compositional bias: low complexity; that stretch reads ASAPTAAGAGAAAPAE. The tract at residues 68 to 109 is disordered; the sequence is ASAPTAAGAGAAAPAEAAEEEKKEEAKEEEESDEDMGFGLFD. Positions 94–103 are enriched in acidic residues; it reads KEEEESDEDM. The residue at position 99 (Ser-99) is a Phosphoserine.

Belongs to the eukaryotic ribosomal protein P1/P2 family. As to quaternary structure, component of the large ribosomal subunit (LSU). Mature yeast ribosomes consist of a small (40S) and a large (60S) subunit. The 40S small subunit contains 1 molecule of ribosomal RNA (18S rRNA) and at least 33 different proteins. The large 60S subunit contains 3 rRNA molecules (25S, 5.8S and 5S rRNA) and at least 46 different proteins. The acidic ribosomal P-proteins form the stalk structure of the 60S subunit. They are organized as a pentameric complex in which uL10/P0 interacts with 2 heterodimers of P1 and P2 proteins.

Its subcellular location is the cytoplasm. Its function is as follows. Component of the ribosome, a large ribonucleoprotein complex responsible for the synthesis of proteins in the cell. The small ribosomal subunit (SSU) binds messenger RNAs (mRNAs) and translates the encoded message by selecting cognate aminoacyl-transfer RNA (tRNA) molecules. The large subunit (LSU) contains the ribosomal catalytic site termed the peptidyl transferase center (PTC), which catalyzes the formation of peptide bonds, thereby polymerizing the amino acids delivered by tRNAs into a polypeptide chain. The nascent polypeptides leave the ribosome through a tunnel in the LSU and interact with protein factors that function in enzymatic processing, targeting, and the membrane insertion of nascent chains at the exit of the ribosomal tunnel. This Schizosaccharomyces pombe (strain 972 / ATCC 24843) (Fission yeast) protein is Large ribosomal subunit protein P1C (rpp103).